Consider the following 330-residue polypeptide: GTPase Obg (330 aa).

One can recognise an Obg domain in the interval 1-159 (MHFIDEVKIY…MWIHLSLKLL (159 aa)). Residues 160–327 (SDVGLVGFPN…IVKLALETIK (168 aa)) enclose the OBG-type G domain. Residues 166–173 (GFPNAGKS), 191–195 (FTTLV), 212–215 (DIPG), 279–282 (NKCD), and 308–310 (STY) contribute to the GTP site. Residues serine 173 and threonine 193 each contribute to the Mg(2+) site.

The protein belongs to the TRAFAC class OBG-HflX-like GTPase superfamily. OBG GTPase family. As to quaternary structure, monomer. It depends on Mg(2+) as a cofactor.

The protein resides in the cytoplasm. In terms of biological role, an essential GTPase which binds GTP, GDP and possibly (p)ppGpp with moderate affinity, with high nucleotide exchange rates and a fairly low GTP hydrolysis rate. Plays a role in control of the cell cycle, stress response, ribosome biogenesis and in those bacteria that undergo differentiation, in morphogenesis control. The polypeptide is GTPase Obg (Rickettsia massiliae (strain Mtu5)).